The sequence spans 197 residues: Holliday junction branch migration complex subunit RuvA (197 aa).

Positions 1–64 (MIASVRGTLI…EDALTLYGFK (64 aa)) are domain I. Residues 65 to 145 (TVEQRQLFET…GLPVAPGVSP (81 aa)) form a domain II region. The interval 146–153 (AVAAVNAE) is flexible linker. Positions 153-197 (ELSEMLVSLGFSSAEASTAIAALPPDAPLDLEERLRLALRYFGAR) are domain III.

Belongs to the RuvA family. As to quaternary structure, homotetramer. Forms an RuvA(8)-RuvB(12)-Holliday junction (HJ) complex. HJ DNA is sandwiched between 2 RuvA tetramers; dsDNA enters through RuvA and exits via RuvB. An RuvB hexamer assembles on each DNA strand where it exits the tetramer. Each RuvB hexamer is contacted by two RuvA subunits (via domain III) on 2 adjacent RuvB subunits; this complex drives branch migration. In the full resolvosome a probable DNA-RuvA(4)-RuvB(12)-RuvC(2) complex forms which resolves the HJ.

It is found in the cytoplasm. Its function is as follows. The RuvA-RuvB-RuvC complex processes Holliday junction (HJ) DNA during genetic recombination and DNA repair, while the RuvA-RuvB complex plays an important role in the rescue of blocked DNA replication forks via replication fork reversal (RFR). RuvA specifically binds to HJ cruciform DNA, conferring on it an open structure. The RuvB hexamer acts as an ATP-dependent pump, pulling dsDNA into and through the RuvAB complex. HJ branch migration allows RuvC to scan DNA until it finds its consensus sequence, where it cleaves and resolves the cruciform DNA. The chain is Holliday junction branch migration complex subunit RuvA from Roseiflexus castenholzii (strain DSM 13941 / HLO8).